A 236-amino-acid chain; its full sequence is Small ribosomal subunit protein uS2c (236 aa).

This sequence belongs to the universal ribosomal protein uS2 family.

It localises to the plastid. The protein resides in the chloroplast. The sequence is that of Small ribosomal subunit protein uS2c (rps2) from Illicium oligandrum (Star anise).